We begin with the raw amino-acid sequence, 237 residues long: B3 domain-containing protein At1g20600 (237 aa).

The segment at 53–79 (LVSQANQKQSRKREEKTEKNQPKRVKN) is disordered. Over residues 64–73 (KREEKTEKNQ) the composition is skewed to basic and acidic residues. Positions 126-230 (KKQLMSSDVD…LEHVFIRGSK (105 aa)) form a DNA-binding region, TF-B3.

It is found in the nucleus. In Arabidopsis thaliana (Mouse-ear cress), this protein is B3 domain-containing protein At1g20600.